The chain runs to 284 residues: Cytosolic Fe-S cluster assembly factor NUBP2 homolog (284 aa).

27–34 lines the ATP pocket; the sequence is GKGGVGKS. [4Fe-4S] cluster is bound by residues C200 and C203.

The protein belongs to the Mrp/NBP35 ATP-binding proteins family. NUBP2/CFD1 subfamily. Heterotetramer of 2 NUBP1 and 2 NUBP2 chains. [4Fe-4S] cluster serves as cofactor.

It localises to the cytoplasm. Component of the cytosolic iron-sulfur (Fe/S) protein assembly (CIA) machinery. Required for maturation of extramitochondrial Fe-S proteins. The NUBP1-NUBP2 heterotetramer forms a Fe-S scaffold complex, mediating the de novo assembly of an Fe-S cluster and its transfer to target apoproteins. The polypeptide is Cytosolic Fe-S cluster assembly factor NUBP2 homolog (Monosiga brevicollis (Choanoflagellate)).